Consider the following 570-residue polypeptide: Phosphoenolpyruvate-protein phosphotransferase (570 aa).

Histidine 189 (tele-phosphohistidine intermediate) is an active-site residue. Residues arginine 296 and arginine 332 each contribute to the phosphoenolpyruvate site. The Mg(2+) site is built by glutamate 431 and aspartate 455. Phosphoenolpyruvate contacts are provided by residues 454 to 455 (ND) and arginine 465. Residue cysteine 502 is the Proton donor of the active site.

Belongs to the PEP-utilizing enzyme family. In terms of assembly, homodimer. Interacts with FloT. Mg(2+) is required as a cofactor.

The protein resides in the cytoplasm. Its subcellular location is the membrane raft. The enzyme catalyses L-histidyl-[protein] + phosphoenolpyruvate = N(pros)-phospho-L-histidyl-[protein] + pyruvate. In terms of biological role, general (non sugar-specific) component of the phosphoenolpyruvate-dependent sugar phosphotransferase system (sugar PTS). This major carbohydrate active-transport system catalyzes the phosphorylation of incoming sugar substrates concomitantly with their translocation across the cell membrane. Enzyme I transfers the phosphoryl group from phosphoenolpyruvate (PEP) to the phosphoryl carrier protein (HPr). The sequence is that of Phosphoenolpyruvate-protein phosphotransferase (ptsI) from Bacillus subtilis (strain 168).